Here is a 443-residue protein sequence, read N- to C-terminus: Eukaryotic translation initiation factor 3 subunit E (443 aa).

The PCI domain occupies 249 to 417 (LDLFFNAGFI…GTVVMNHPPS (169 aa)).

It belongs to the eIF-3 subunit E family. As to quaternary structure, component of the eukaryotic translation initiation factor 3 (eIF-3) complex.

It localises to the cytoplasm. Its function is as follows. Component of the eukaryotic translation initiation factor 3 (eIF-3) complex, which is involved in protein synthesis of a specialized repertoire of mRNAs and, together with other initiation factors, stimulates binding of mRNA and methionyl-tRNAi to the 40S ribosome. The eIF-3 complex specifically targets and initiates translation of a subset of mRNAs involved in cell proliferation. This Neurospora crassa (strain ATCC 24698 / 74-OR23-1A / CBS 708.71 / DSM 1257 / FGSC 987) protein is Eukaryotic translation initiation factor 3 subunit E (int-6).